Consider the following 91-residue polypeptide: Probable Fe(2+)-trafficking protein (91 aa).

The protein belongs to the Fe(2+)-trafficking protein family. Monomer.

Its function is as follows. Could be a mediator in iron transactions between iron acquisition and iron-requiring processes, such as synthesis and/or repair of Fe-S clusters in biosynthetic enzymes. This chain is Probable Fe(2+)-trafficking protein, found in Klebsiella pneumoniae (strain 342).